The following is a 387-amino-acid chain: Alpha-sarcoglycan (387 aa).

Residues 1-23 (MAATLTWILLFVGLLAGLRDTKA) form the signal peptide. Residues 24–290 (QQTTLYPLVG…ATGRDFLADA (267 aa)) lie on the Extracellular side of the membrane. N174 and N246 each carry an N-linked (GlcNAc...) asparagine glycan. Residues 291-311 (LVTLLVPLLVALLLTLLLAYI) traverse the membrane as a helical segment. Residues 312–387 (MCCRREGQLK…AQVPLILDQH (76 aa)) are Cytoplasmic-facing. Residue S377 is modified to Phosphoserine.

The protein belongs to the sarcoglycan alpha/epsilon family. As to quaternary structure, interacts with the syntrophin SNTA1. Cross-link to form 2 major subcomplexes: one consisting of SGCB, SGCD and SGCG and the other consisting of SGCB and SGCD. The association between SGCB and SGCG is particularly strong while SGCA is loosely associated with the other sarcoglycans. Strongly expressed in skeletal and heart muscle.

The protein resides in the cell membrane. It is found in the sarcolemma. It localises to the cytoplasm. Its subcellular location is the cytoskeleton. Functionally, component of the sarcoglycan complex, a subcomplex of the dystrophin-glycoprotein complex which forms a link between the F-actin cytoskeleton and the extracellular matrix. This chain is Alpha-sarcoglycan (SGCA), found in Mesocricetus auratus (Golden hamster).